A 418-amino-acid polypeptide reads, in one-letter code: UDP-N-acetylglucosamine 1-carboxyvinyltransferase (418 aa).

Residue 22–23 (KN) participates in phosphoenolpyruvate binding. Arginine 91 contacts UDP-N-acetyl-alpha-D-glucosamine. The active-site Proton donor is the cysteine 115. Position 115 is a 2-(S-cysteinyl)pyruvic acid O-phosphothioketal (cysteine 115). Residues aspartate 303 and isoleucine 325 each contribute to the UDP-N-acetyl-alpha-D-glucosamine site.

The protein belongs to the EPSP synthase family. MurA subfamily.

The protein localises to the cytoplasm. It carries out the reaction phosphoenolpyruvate + UDP-N-acetyl-alpha-D-glucosamine = UDP-N-acetyl-3-O-(1-carboxyvinyl)-alpha-D-glucosamine + phosphate. Its pathway is cell wall biogenesis; peptidoglycan biosynthesis. In terms of biological role, cell wall formation. Adds enolpyruvyl to UDP-N-acetylglucosamine. The chain is UDP-N-acetylglucosamine 1-carboxyvinyltransferase from Syntrophobacter fumaroxidans (strain DSM 10017 / MPOB).